Here is a 110-residue protein sequence, read N- to C-terminus: SOSS complex subunit C (110 aa).

Belongs to the SOSS-C family. As to quaternary structure, belongs to the multiprotein complex Integrator. Component of the SOSS complex, composed of soss-b (soss-b1/nabp2 or soss-b2/nabp1), soss-a/ints3 and soss-c/inip.

Its subcellular location is the nucleus. Its function is as follows. Component of the SOSS complex, a multiprotein complex that functions downstream of the MRN complex to promote DNA repair and G2/M checkpoint. The SOSS complex associates with single-stranded DNA at DNA lesions and influences diverse endpoints in the cellular DNA damage response including cell-cycle checkpoint activation, recombinational repair and maintenance of genomic stability. Required for efficient homologous recombination-dependent repair of double-strand breaks (DSBs). This chain is SOSS complex subunit C (inip), found in Xenopus laevis (African clawed frog).